The sequence spans 473 residues: Aspartyl/glutamyl-tRNA(Asn/Gln) amidotransferase subunit B (473 aa).

The protein belongs to the GatB/GatE family. GatB subfamily. In terms of assembly, heterotrimer of A, B and C subunits.

The enzyme catalyses L-glutamyl-tRNA(Gln) + L-glutamine + ATP + H2O = L-glutaminyl-tRNA(Gln) + L-glutamate + ADP + phosphate + H(+). It carries out the reaction L-aspartyl-tRNA(Asn) + L-glutamine + ATP + H2O = L-asparaginyl-tRNA(Asn) + L-glutamate + ADP + phosphate + 2 H(+). Its function is as follows. Allows the formation of correctly charged Asn-tRNA(Asn) or Gln-tRNA(Gln) through the transamidation of misacylated Asp-tRNA(Asn) or Glu-tRNA(Gln) in organisms which lack either or both of asparaginyl-tRNA or glutaminyl-tRNA synthetases. The reaction takes place in the presence of glutamine and ATP through an activated phospho-Asp-tRNA(Asn) or phospho-Glu-tRNA(Gln). The sequence is that of Aspartyl/glutamyl-tRNA(Asn/Gln) amidotransferase subunit B from Francisella tularensis subsp. tularensis (strain FSC 198).